The following is a 595-amino-acid chain: Aspartate--tRNA(Asp/Asn) ligase (595 aa).

L-aspartate is bound at residue glutamate 175. Residues 199-202 are aspartate; it reads QQYK. Residues arginine 221 and histidine 454 each contribute to the L-aspartate site. An ATP-binding site is contributed by 221–223; the sequence is RDE. Position 488 (glutamate 488) interacts with ATP. Residue arginine 495 coordinates L-aspartate. Residue 540-543 coordinates ATP; that stretch reads GIDR.

It belongs to the class-II aminoacyl-tRNA synthetase family. Type 1 subfamily. Homodimer.

It localises to the cytoplasm. The catalysed reaction is tRNA(Asx) + L-aspartate + ATP = L-aspartyl-tRNA(Asx) + AMP + diphosphate. Functionally, aspartyl-tRNA synthetase with relaxed tRNA specificity since it is able to aspartylate not only its cognate tRNA(Asp) but also tRNA(Asn). Reaction proceeds in two steps: L-aspartate is first activated by ATP to form Asp-AMP and then transferred to the acceptor end of tRNA(Asp/Asn). The polypeptide is Aspartate--tRNA(Asp/Asn) ligase (Sinorhizobium medicae (strain WSM419) (Ensifer medicae)).